A 362-amino-acid chain; its full sequence is 3-dehydroquinate synthase (362 aa).

Residues 95 to 99, 119 to 120, lysine 132, and lysine 141 each bind NAD(+); these read GVVGD and TT. The Zn(2+) site is built by glutamate 174, histidine 238, and histidine 255.

This sequence belongs to the sugar phosphate cyclases superfamily. Dehydroquinate synthase family. It depends on Co(2+) as a cofactor. Zn(2+) is required as a cofactor. NAD(+) serves as cofactor.

The protein resides in the cytoplasm. The catalysed reaction is 7-phospho-2-dehydro-3-deoxy-D-arabino-heptonate = 3-dehydroquinate + phosphate. The protein operates within metabolic intermediate biosynthesis; chorismate biosynthesis; chorismate from D-erythrose 4-phosphate and phosphoenolpyruvate: step 2/7. Functionally, catalyzes the conversion of 3-deoxy-D-arabino-heptulosonate 7-phosphate (DAHP) to dehydroquinate (DHQ). The polypeptide is 3-dehydroquinate synthase (Chlorobium luteolum (strain DSM 273 / BCRC 81028 / 2530) (Pelodictyon luteolum)).